The sequence spans 437 residues: tRNA modification GTPase MnmE (437 aa).

3 residues coordinate (6S)-5-formyl-5,6,7,8-tetrahydrofolate: R21, E79, and R119. One can recognise a TrmE-type G domain in the interval 223–364 (GFRVVLAGPP…FRSALIAHAR (142 aa)). GTP-binding positions include 233 to 238 (NAGKST), 252 to 258 (AAEPGTT), and 277 to 280 (DTAG). Mg(2+) contacts are provided by S237 and T258. K437 provides a ligand contact to (6S)-5-formyl-5,6,7,8-tetrahydrofolate.

The protein belongs to the TRAFAC class TrmE-Era-EngA-EngB-Septin-like GTPase superfamily. TrmE GTPase family. In terms of assembly, homodimer. Heterotetramer of two MnmE and two MnmG subunits. K(+) serves as cofactor.

It localises to the cytoplasm. In terms of biological role, exhibits a very high intrinsic GTPase hydrolysis rate. Involved in the addition of a carboxymethylaminomethyl (cmnm) group at the wobble position (U34) of certain tRNAs, forming tRNA-cmnm(5)s(2)U34. This chain is tRNA modification GTPase MnmE, found in Novosphingobium aromaticivorans (strain ATCC 700278 / DSM 12444 / CCUG 56034 / CIP 105152 / NBRC 16084 / F199).